We begin with the raw amino-acid sequence, 155 residues long: Ubiquitin-conjugating enzyme E2 14 (155 aa).

A UBC core domain is found at 7-154 (SSSRRLTKEY…ARDYVEQFAK (148 aa)). Residue Cys-91 is the Glycyl thioester intermediate of the active site.

Belongs to the ubiquitin-conjugating enzyme family.

It carries out the reaction S-ubiquitinyl-[E1 ubiquitin-activating enzyme]-L-cysteine + [E2 ubiquitin-conjugating enzyme]-L-cysteine = [E1 ubiquitin-activating enzyme]-L-cysteine + S-ubiquitinyl-[E2 ubiquitin-conjugating enzyme]-L-cysteine.. It functions in the pathway protein modification; protein ubiquitination. Functionally, catalyzes the covalent attachment of ubiquitin to other proteins. Mediates the selective degradation of short-lived and abnormal proteins. This is Ubiquitin-conjugating enzyme E2 14 (ubc14) from Schizosaccharomyces pombe (strain 972 / ATCC 24843) (Fission yeast).